The following is a 260-amino-acid chain: HTH-type transcriptional repressor NanR (260 aa).

The 69-residue stretch at 27-95 (KKLSDMVEEE…NGERARVSMP (69 aa)) folds into the HTH gntR-type domain. Residues 55 to 74 (ERELMEFFNVGRPSVREALA) constitute a DNA-binding region (H-T-H motif).

Belongs to the NanR family.

Its function is as follows. Transcriptional repressor that controls expression of the genes required for the catabolism of sialic acids. The sequence is that of HTH-type transcriptional repressor NanR from Enterobacter sp. (strain 638).